Consider the following 497-residue polypeptide: MTSVKLSTPQTGEFEQPTGLFINNEFVKAVDGKTFDVINPSTEEVICSVQEATEKDVDIAVAAARKAFNGPWRKETPENRGKLLNKLADLFEKNADLIAAVEALDNGKAFSMAKNVDVPAAAGCLRYYGGWADKIEGKVVDTAPDSFNYIRKEPIGVCGQIIPWNFPILMWSWKIGPAIATGNTVVLKTAEQTPLSAYIACKLIQEAGFPPGVINVITGFGKIAGAAMSAHMDIDKIAFTGSTVVGRQIMKSAAGSNLKKVTLELGGKSPNIVFADADLDEAIHWVNFGIYFNHGQACCAGSRIYVQEEIYDKFIQRFKERAAQNAVGDPFAADTFQGPQVSQLQFDRIMGYIEEGKKSGATIETGGNRKGDKGYFIEPTIFSNVTEDMKIQQEEIFGPVCTISKFKTKADVIKIGNNTTYGLAAAVHTSNLTTAIEVANALRAGTVWVNSYNTLHWQLPFGGYKESGIGRELGEAALDNYIQTKTVSIRLGDVLFG.

241–246 serves as a coordination point for NAD(+); the sequence is GSTVVG. E264 serves as the catalytic Proton acceptor. C298 serves as the catalytic Nucleophile.

This sequence belongs to the aldehyde dehydrogenase family.

The protein localises to the cytoplasm. The enzyme catalyses an aldehyde + NAD(+) + H2O = a carboxylate + NADH + 2 H(+). It functions in the pathway alcohol metabolism; ethanol degradation; acetate from ethanol: step 2/2. This chain is Aldehyde dehydrogenase (ALTA10), found in Alternaria alternata (Alternaria rot fungus).